Consider the following 463-residue polypeptide: 23S rRNA (uracil(1939)-C(5))-methyltransferase RlmD (463 aa).

A TRAM domain is found at 6-76; it reads KSRKPQQPEY…KRLEEAEMVA (71 aa). [4Fe-4S] cluster contacts are provided by cysteine 90, cysteine 96, cysteine 99, and cysteine 178. Glutamine 288, phenylalanine 317, asparagine 322, glutamate 341, aspartate 368, and aspartate 389 together coordinate S-adenosyl-L-methionine. Residue cysteine 415 is the Nucleophile of the active site.

The protein belongs to the class I-like SAM-binding methyltransferase superfamily. RNA M5U methyltransferase family. RlmD subfamily.

It catalyses the reaction uridine(1939) in 23S rRNA + S-adenosyl-L-methionine = 5-methyluridine(1939) in 23S rRNA + S-adenosyl-L-homocysteine + H(+). Catalyzes the formation of 5-methyl-uridine at position 1939 (m5U1939) in 23S rRNA. This is 23S rRNA (uracil(1939)-C(5))-methyltransferase RlmD from Acinetobacter baumannii (strain ACICU).